Consider the following 2715-residue polypeptide: Teneurin-3 (2715 aa).

2 disordered regions span residues methionine 1–glutamine 38 and glycine 142–proline 223. One can recognise a Teneurin N-terminal domain in the interval methionine 1–cysteine 309. The Cytoplasmic segment spans residues methionine 1–threonine 310. The segment covering glycine 142–serine 153 has biased composition (low complexity). Residues aspartate 159–serine 168 are compositionally biased toward basic and acidic residues. Polar residues predominate over residues glutamate 171–leucine 182. Positions threonine 201–asparagine 213 are enriched in low complexity. A helical membrane pass occupies residues alanine 311–methionine 331. Over histidine 332 to arginine 2715 the chain is Extracellular. N-linked (GlcNAc...) asparagine glycosylation is found at asparagine 345, asparagine 380, and asparagine 419. EGF-like domains lie at serine 514 to serine 545, arginine 546 to aspartate 576, proline 578 to glutamate 610, glutamate 611 to glutamate 642, leucine 644 to serine 677, asparagine 678 to glutamine 709, arginine 710 to threonine 739, and isoleucine 740 to aspartate 783. 22 disulfide bridges follow: cysteine 518–cysteine 528, cysteine 522–cysteine 533, cysteine 535–cysteine 544, cysteine 553–cysteine 564, cysteine 566–cysteine 575, cysteine 582–cysteine 593, cysteine 587–cysteine 598, cysteine 600–cysteine 609, cysteine 614–cysteine 625, cysteine 619–cysteine 630, cysteine 632–cysteine 641, cysteine 652–cysteine 665, cysteine 667–cysteine 676, cysteine 681–cysteine 691, cysteine 685–cysteine 696, cysteine 698–cysteine 707, cysteine 712–cysteine 722, cysteine 716–cysteine 727, cysteine 729–cysteine 738, cysteine 752–cysteine 762, cysteine 756–cysteine 771, and cysteine 773–cysteine 782. Residue asparagine 670 is glycosylated (N-linked (GlcNAc...) asparagine). 2 N-linked (GlcNAc...) asparagine glycosylation sites follow: asparagine 869 and asparagine 892. The NHL 1 repeat unit spans residues leucine 1181–serine 1209. Asparagine 1211 carries N-linked (GlcNAc...) asparagine glycosylation. NHL repeat units lie at residues leucine 1216–leucine 1260, alanine 1286–isoleucine 1330, cysteine 1347–asparagine 1387, leucine 1418–isoleucine 1445, and cysteine 1474–asparagine 1517. One copy of the YD 1 repeat lies at tyrosine 1527–histidine 1546. Residues asparagine 1543 and asparagine 1560 are each glycosylated (N-linked (GlcNAc...) asparagine). 3 YD repeats span residues tyrosine 1563–arginine 1583, tyrosine 1626–phenylalanine 1645, and phenylalanine 1646–histidine 1668. 4 N-linked (GlcNAc...) asparagine glycosylation sites follow: asparagine 1656, asparagine 1693, asparagine 1751, and asparagine 1836. YD repeat units follow at residues tyrosine 1839–aspartate 1858, tyrosine 1880–glutamate 1898, tyrosine 1899–glutamine 1919, tyrosine 1926–aspartate 1943, tyrosine 1944–lysine 1965, tyrosine 1966–serine 1983, tyrosine 1986–threonine 2006, tyrosine 2009–valine 2029, tyrosine 2037–proline 2056, phenylalanine 2062–tyrosine 2079, tyrosine 2080–isoleucine 2106, tyrosine 2108–glutamine 2121, tyrosine 2122–alanine 2145, tyrosine 2148–asparagine 2168, tyrosine 2169–leucine 2189, tyrosine 2191–glycine 2211, tyrosine 2223–tyrosine 2243, and tyrosine 2245–phenylalanine 2265. N-linked (GlcNAc...) asparagine glycosylation occurs at asparagine 1937. Asparagine 2140 is a glycosylation site (N-linked (GlcNAc...) asparagine). A glycan (N-linked (GlcNAc...) asparagine) is linked at asparagine 2280. A YD 23 repeat occupies tyrosine 2291 to threonine 2332. N-linked (GlcNAc...) asparagine glycosylation occurs at asparagine 2592.

It belongs to the tenascin family. Teneurin subfamily. In terms of assembly, homodimer; disulfide-linked; to mediate homophilic cell adhesion. Most isoforms (isoform-type A and type-B) can mediate homophilic interaction. Heterodimer with either TENM1 or TENM2. May also form heterodimer with TENM4. Isoform A0B0: Does not form homodimer to mediate homophilic cell adhesion. Isoform A0B0: Heterodimer with ADGRL3. As to expression, in brain, expressed in highly specific regions of the postnatal brain: expressed in restricted domains of the developing hippocampal region, including proximal CA1, distal subiculum, and medial entorhinal cortex (at protein level). Expression matches with topographic connectivity between entorhinal cortex, CA1, and subiculum (at protein level). Also specifically expressed in subregions of the presubiculum, parasubiculum, medial mammillary nucleus and anteroventral thalamic nucleus that are topographically connected with subiculum or entorhinal cortex (at protein level). Expressed in neurons of the developing visual pathway (at protein level). Expressed in the dorsal and ventral lateral geniculate nucleus (dLGN and vLGN) and optic tract at birth. Expressed in ipsilateral retinal axons of terminal zones (TZs) in the developing superior colliculus (SC) throughout the first postnatal week. Expressed in the layer V of the visual caudal cortex. Expressed in the femoral and mandibular condylar cartilages. Strongly expressed in fibrous and proliferating chondrocytes. Poorly expressed in mature chondrocytes. Not expressed in hypertrophic chondrocytes.

The protein resides in the cell membrane. The protein localises to the cell projection. Its subcellular location is the axon. Functionally, involved in neural development by regulating the establishment of proper connectivity within the nervous system. Acts in both pre- and postsynaptic neurons in the hippocampus to control the assembly of a precise topographic projection: required in both CA1 and subicular neurons for the precise targeting of proximal CA1 axons to distal subiculum, probably by promoting homophilic cell adhesion. Promotes homophilic adhesion in a splicing isoform-dependent manner: most isoforms (isoform-type A and type-B) can mediate homophilic interaction. Promotes axon guidance. Required for proper dendrite morphogenesis and axon targeting in the vertebrate visual system, thereby playing a key role in the development of the visual pathway. Regulates the formation in ipsilateral retinal mapping to both the dorsal lateral geniculate nucleus (dLGN) and the superior colliculus (SC). May also be involved in the differentiation of the fibroblast-like cells in the superficial layer of mandibular condylar cartilage into chondrocytes. The sequence is that of Teneurin-3 from Mus musculus (Mouse).